A 564-amino-acid polypeptide reads, in one-letter code: ATP-dependent RNA helicase DBP3 (564 aa).

Residues 31-125 are disordered; the sequence is TKQQTMSKDK…TNYTQSSKLS (95 aa). The segment covering 58–73 has biased composition (basic and acidic residues); that stretch reads ADSKKQRKLEKQEKKD. A compositionally biased stretch (basic residues) spans 74–96; that stretch reads KKDKKDKKEKKEKKEKKHKKEKK. Low complexity predominate over residues 112-125; sequence SSSSTNYTQSSKLS. The short motif at 155-181 is the Q motif element; that stretch reads LSFDQVQLTSAITSKLSKFDKPTPIQS. One can recognise a Helicase ATP-binding domain in the interval 184–356; sequence WPFLLSGKDV…NNFMNSPVKV (173 aa). 197–204 is an ATP binding site; sequence AETGSGKT. A DEAD box motif is present at residues 303–306; it reads DEAD. Residues 385–534 form the Helicase C-terminal domain; it reads KLIQLLRKYN…PVPEELLKFG (150 aa).

This sequence belongs to the DEAD box helicase family. DDX5/DBP2 subfamily.

Its subcellular location is the nucleus. The protein resides in the nucleolus. The catalysed reaction is ATP + H2O = ADP + phosphate + H(+). ATP-dependent RNA helicase required for 60S ribosomal subunit synthesis. Involved in efficient pre-rRNA processing, predominantly at site A3, which is necessary for the normal formation of 25S and 5.8S rRNAs. The chain is ATP-dependent RNA helicase DBP3 (DBP3) from Candida albicans (strain SC5314 / ATCC MYA-2876) (Yeast).